The primary structure comprises 362 residues: Microfibril-associated glycoprotein 3 (362 aa).

The first 18 residues, 1 to 18 (MKLHCCLFTLVASIIVPA), serve as a signal peptide directing secretion. Topologically, residues 19-147 (AFVLEDVDFD…LRVIFTSGDM (129 aa)) are extracellular. Asn36, Asn41, and Asn110 each carry an N-linked (GlcNAc...) asparagine glycan. The Ig-like C2-type domain occupies 45 to 137 (PSSFELSASS…SPIRASYSVT (93 aa)). Cys73 and Cys124 are oxidised to a cystine. A helical transmembrane segment spans residues 148 to 170 (SVYYMIVCLIAFTITLILNVTRL). Residues 171 to 362 (CMMSSHLRKT…KDGAYENCQL (192 aa)) lie on the Cytoplasmic side of the membrane. Disordered regions lie at residues 285–306 (VINP…GSLN) and 323–350 (ETKS…ESNC). Residues 323–337 (ETKSIDTESQGSSHF) are compositionally biased toward polar residues.

Post-translationally, glycosylated.

It localises to the cell membrane. Its function is as follows. Component of the elastin-associated microfibrils. The polypeptide is Microfibril-associated glycoprotein 3 (MFAP3) (Homo sapiens (Human)).